We begin with the raw amino-acid sequence, 507 residues long: MPDKRALSDSYEQLPLKRAATVSSNTNDISDERIIATLRHPRACVSASGSPFSASPSFQQPVPLCSFSFDEHRKQWHDDRCKRFYRGPPPYNQRHPRQHGARAVFGADLNYGLERFVRRDQDVPEHLDALVAALQHRTEAAVSDEERDQVDQERRKADVVTWRGIITKICTAYEQTAEARFSDPLELNAMMLDDTLYLEEYTCKSARAQKQNKEDDPKMLRMGYYGYSFESYCTVDTELQTREPFRPIPSKESSLPHPAGWSGDVNTNVQWCQVVKTKLGNNRLVIGGEVDAVERNPKTGREELVELKTSMQMTWAQHNPSKAALDQERFEKKLLKFFLQSYLLGIGKIVVGFRDHHGILTTHQDFETLRIPRMVRAGQPIAGRFDHTGKPVIRQQSVWEPKDGLGFGDQILSFIRQTILSRSIQATPTEQISAGAGANTPNPTAAVGQVHHPVYRVTFRSPFDQVEMRCLSEQEIYEEVQDSGGSGARVGFLPRSFYDFVQRRAGS.

R73 contributes to the substrate binding site. E230 is an a divalent metal cation binding site. Residues C272 and E289 each contribute to the substrate site. Residues D291, E306, and L307 each coordinate a divalent metal cation. Substrate-binding residues include K308 and Q340.

The protein belongs to the DXO/Dom3Z family. As to quaternary structure, interacts with RAT1; the interaction is direct, stabilizes RAT1 protein structure and stimulates its exoribonuclease activity. The interaction also stimulates RAI1 pyrophosphohydrolase activity, probably by recruiting it to mRNA substrates. A divalent metal cation serves as cofactor.

It localises to the nucleus. The enzyme catalyses a 5'-end NAD(+)-phospho-ribonucleoside in mRNA + H2O = a 5'-end phospho-ribonucleoside in mRNA + NAD(+) + H(+). It carries out the reaction a 5'-end (N(7)-methyl 5'-triphosphoguanosine)-ribonucleoside-ribonucleotide in mRNA + H2O = a (N(7)-methyl 5'-triphosphoguanosine)-nucleoside + a 5'-end phospho-ribonucleoside in mRNA + H(+). The catalysed reaction is a 5'-end triphospho-ribonucleoside in mRNA + H2O = a 5'-end phospho-ribonucleoside in mRNA + diphosphate + H(+). Functionally, decapping enzyme for NAD-capped RNAs: specifically hydrolyzes the nicotinamide adenine dinucleotide (NAD) cap from a subset of RNAs by removing the entire NAD moiety from the 5'-end of an NAD-capped RNA. The NAD-cap is present at the 5'-end of some RNAs and snoRNAs. In contrast to the canonical 5'-end N7 methylguanosine (m7G) cap, the NAD cap promotes mRNA decay. Also acts as a non-canonical decapping enzyme that removes the entire cap structure of m7G capped or incompletely capped RNAs. Has decapping activity toward incomplete 5'-end m7G cap mRNAs such as unmethylated 5'-end-capped RNA (cap0), while it has no activity toward 2'-O-ribose methylated m7G cap (cap1). Also possesses RNA 5'-pyrophosphohydrolase activity by hydrolyzing the 5'-end triphosphate to release pyrophosphates. Stimulates exoribonuclease activity of Rat1, allowing it to degrade RNAs with stable secondary structure more effectively. In Mycosarcoma maydis (Corn smut fungus), this protein is Decapping nuclease RAI1 (RAI1).